Consider the following 144-residue polypeptide: Large ribosomal subunit protein uL13 (144 aa).

This sequence belongs to the universal ribosomal protein uL13 family. In terms of assembly, part of the 50S ribosomal subunit.

Functionally, this protein is one of the early assembly proteins of the 50S ribosomal subunit, although it is not seen to bind rRNA by itself. It is important during the early stages of 50S assembly. This chain is Large ribosomal subunit protein uL13, found in Mesomycoplasma hyopneumoniae (strain 232) (Mycoplasma hyopneumoniae).